Consider the following 370-residue polypeptide: D-alanine--D-alanine ligase (370 aa).

The 209-residue stretch at 144-352 (KKIFADAGIP…YGALIERLVD (209 aa)) folds into the ATP-grasp domain. 177–232 (EEVLTYPVFVKPANLGSSVGISKATNKTELIEAMTEAFLYDRRVVVEQGVVAREIE) serves as a coordination point for ATP. Mg(2+) is bound by residues D306, E319, and N321.

It belongs to the D-alanine--D-alanine ligase family. Mg(2+) is required as a cofactor. Requires Mn(2+) as cofactor.

The protein localises to the cytoplasm. The enzyme catalyses 2 D-alanine + ATP = D-alanyl-D-alanine + ADP + phosphate + H(+). The protein operates within cell wall biogenesis; peptidoglycan biosynthesis. Cell wall formation. This is D-alanine--D-alanine ligase from Listeria innocua serovar 6a (strain ATCC BAA-680 / CLIP 11262).